We begin with the raw amino-acid sequence, 221 residues long: Germin-like protein 5-1 (221 aa).

The signal sequence occupies residues 1–25 (MARPSLPCAVVAVLLLALLPTPSTA). Cys-35 and Cys-50 are joined by a disulfide. One can recognise a Cupin type-1 domain in the interval 62–210 (KGLAAAGNTN…AFQVGTKEVE (149 aa)). Asn-71 is a glycosylation site (N-linked (GlcNAc...) asparagine). 4 residues coordinate Mn(2+): His-110, His-112, Glu-117, and His-156.

The protein belongs to the germin family. Oligomer (believed to be a pentamer but probably hexamer).

Its subcellular location is the secreted. The protein resides in the extracellular space. The protein localises to the apoplast. Functionally, may play a role in plant defense. Probably has no oxalate oxidase activity even if the active site is conserved. In Oryza sativa subsp. japonica (Rice), this protein is Germin-like protein 5-1.